Here is a 132-residue protein sequence, read N- to C-terminus: MKTVKVNIVTPDGPVYDADIEMVSVRAESGDLGILPGHIPTVAPLKIGAVRLKKDGQTELAAVSGGFLEVRPDQVTILAQAAETAESIDKERALAAKKRAEDRLNKRSDDTDIRRAELALQRAVNRLDVAGN.

Belongs to the ATPase epsilon chain family. As to quaternary structure, F-type ATPases have 2 components, CF(1) - the catalytic core - and CF(0) - the membrane proton channel. CF(1) has five subunits: alpha(3), beta(3), gamma(1), delta(1), epsilon(1). CF(0) has three main subunits: a, b and c.

It is found in the cell membrane. Produces ATP from ADP in the presence of a proton gradient across the membrane. This is ATP synthase epsilon chain from Bacillus velezensis (strain DSM 23117 / BGSC 10A6 / LMG 26770 / FZB42) (Bacillus amyloliquefaciens subsp. plantarum).